Here is a 123-residue protein sequence, read N- to C-terminus: MTMLWVCLAGGLGAVARFLLDSRINSRFSVPVPLGTLVINVMGSLLLGLITAAALNHLGFSQNLKEPLGTGFCGGFTTFSTASVETARAAYGCGRRVGALHCMGMAIAGVLAAILGLALGSRV.

Helical transmembrane passes span 1–21 (MTML…FLLD) and 30–50 (VPVP…LGLI). 2 residues coordinate Na(+): Gly74 and Thr77. The helical transmembrane segment at 99–119 (ALHCMGMAIAGVLAAILGLAL) threads the bilayer.

The protein belongs to the fluoride channel Fluc/FEX (TC 1.A.43) family.

The protein resides in the cell membrane. The enzyme catalyses fluoride(in) = fluoride(out). Its activity is regulated as follows. Na(+) is not transported, but it plays an essential structural role and its presence is essential for fluoride channel function. Functionally, fluoride-specific ion channel. Important for reducing fluoride concentration in the cell, thus reducing its toxicity. This chain is Fluoride-specific ion channel FluC 2, found in Cutibacterium acnes (strain DSM 16379 / KPA171202) (Propionibacterium acnes).